We begin with the raw amino-acid sequence, 280 residues long: Urease accessory protein UreD 1 (280 aa).

This sequence belongs to the UreD family. UreD, UreF and UreG form a complex that acts as a GTP-hydrolysis-dependent molecular chaperone, activating the urease apoprotein by helping to assemble the nickel containing metallocenter of UreC. The UreE protein probably delivers the nickel.

It is found in the cytoplasm. In terms of biological role, required for maturation of urease via the functional incorporation of the urease nickel metallocenter. The sequence is that of Urease accessory protein UreD 1 from Brucella abortus biovar 1 (strain 9-941).